Consider the following 420-residue polypeptide: Protein Rv2184c (420 aa).

It belongs to the arsA ATPase family.

The protein is Protein Rv2184c of Mycobacterium tuberculosis (strain ATCC 25618 / H37Rv).